A 248-amino-acid polypeptide reads, in one-letter code: UPF0246 protein A1I_02510 (248 aa).

The protein belongs to the UPF0246 family.

This chain is UPF0246 protein A1I_02510, found in Rickettsia bellii (strain OSU 85-389).